The sequence spans 172 residues: Acetolactate synthase small subunit (172 aa).

One can recognise an ACT domain in the interval 4 to 78; sequence TLSVLVEDEA…NILKVDNITE (75 aa).

The protein belongs to the acetolactate synthase small subunit family. In terms of assembly, dimer of large and small chains.

It is found in the plastid. It localises to the chloroplast. It carries out the reaction 2 pyruvate + H(+) = (2S)-2-acetolactate + CO2. It functions in the pathway amino-acid biosynthesis; L-isoleucine biosynthesis; L-isoleucine from 2-oxobutanoate: step 1/4. It participates in amino-acid biosynthesis; L-valine biosynthesis; L-valine from pyruvate: step 1/4. The protein is Acetolactate synthase small subunit (ilvH) of Cyanidium caldarium (Red alga).